The sequence spans 552 residues: Harmonin (552 aa).

Positions 1 to 86 (MDRKVAREFR…LTPRRSRKLK (86 aa)) are N-terminal domain. PDZ domains lie at 87-169 (EVRL…HIGL) and 211-293 (KVFI…AAAG). Residues 194 to 552 (GVRGSLGSPG…KEYDDELTFF (359 aa)) are mediates interaction with MYO7B. Residue serine 219 is modified to Phosphoserine. The stretch at 310 to 377 (RELQRQELLM…EKFKKQWEED (68 aa)) forms a coiled coil. The disordered stretch occupies residues 401–427 (KPKYDQGVEPELEPADDLDGGTEEQGE). Over residues 408–427 (VEPELEPADDLDGGTEEQGE) the composition is skewed to acidic residues. Residues 452 to 537 (DVRLLRIKKE…QGGDWIDLVV (86 aa)) form the PDZ 3 domain.

In terms of assembly, part of the IMAC/intermicrovillar adhesion complex/intermicrovillar tip-link complex composed of ANKS4B, MYO7B, USH1C, CDHR2 and CDHR5. Part of a complex composed of USH1C, USH1G and MYO7A. Interacts with F-actin. Interacts with USH2A. Interacts with SLC4A7. Interacts (via PDZ1 domain) with the C-terminus of USHBP1. Interacts (via N-terminus and PDZ 2 domain) with CDH23. Interacts with USH1G. Interacts with MYO7B. Interacts with CDHR2 and CDHR5; may mediate their interaction with MYO7B at the microvilli tip. Interacts (via PDZ 1 domain) with ANKS4B. Interacts (via PDZ 1 domain) with DOCK4. Expressed in small intestine, colon, kidney, eye and weakly in pancreas. Expressed also in vestibule of the inner ear.

The protein localises to the cytoplasm. It localises to the cytosol. Its subcellular location is the cytoskeleton. It is found in the cell projection. The protein resides in the microvillus. Its function is as follows. Anchoring/scaffolding protein that is a part of the functional network formed by USH1C, USH1G, CDH23 and MYO7A that mediates mechanotransduction in cochlear hair cells. Required for normal development and maintenance of cochlear hair cell bundles. As part of the intermicrovillar adhesion complex/IMAC plays a role in brush border differentiation, controlling microvilli organization and length. Probably plays a central regulatory role in the assembly of the complex, recruiting CDHR2, CDHR5 and MYO7B to the microvilli tips. This chain is Harmonin (USH1C), found in Homo sapiens (Human).